The primary structure comprises 332 residues: Ferredoxin--NADP reductase 1 (332 aa).

7 residues coordinate FAD: Asp35, Lys43, Phe48, Val88, Phe123, Asp284, and Thr325.

It belongs to the ferredoxin--NADP reductase type 2 family. As to quaternary structure, homodimer. FAD serves as cofactor.

It carries out the reaction 2 reduced [2Fe-2S]-[ferredoxin] + NADP(+) + H(+) = 2 oxidized [2Fe-2S]-[ferredoxin] + NADPH. The chain is Ferredoxin--NADP reductase 1 from Listeria monocytogenes serotype 4b (strain F2365).